The sequence spans 141 residues: Putative pre-16S rRNA nuclease (141 aa).

The protein belongs to the YqgF nuclease family.

The protein localises to the cytoplasm. Functionally, could be a nuclease involved in processing of the 5'-end of pre-16S rRNA. This is Putative pre-16S rRNA nuclease from Cupriavidus necator (strain ATCC 17699 / DSM 428 / KCTC 22496 / NCIMB 10442 / H16 / Stanier 337) (Ralstonia eutropha).